Reading from the N-terminus, the 602-residue chain is MRKHLNDLYKQIEKFPKTSGCYKMYSKDNKILYIGKAKNLRSRVKNYFSKRTSHKTKILMNNVTNIEIITTNSEYEALLLECNLIKKYKPTYNIKLKDDKGYPMIRITCEKYPRIFKTRKIINDGSEYFGPYVNVKNLDLVLDLINKTFKTKKCKKKSKNPCLYFHMGQCLGVCYREDLEDEYRKEIEQIKHILNGNISKLLNDIEIKMKEVIMKENFEAAIKLKETKKSLIEISQTQIITKIDKLSEDYLYIHKTNSLNTIVILKYKDGKLTEKDIHFDESIYEEDELIEKFITQYYTSPNMIVPDKIHIFKKIDTSNITKLINELKNIKTEIIYKETQDNIKIIEMATSNAKLALITYNHEKNKAIENLKTILEMKKLPKTIEGFDIAHINGYKTVASLVTFKMGKPFKDGYRVYKINSLSNGEIDDCKAIKEVISRRYSKLINEQLKLPDLILIDGGKGQLNAAYSILKGLRIEEKIAICALAKKEEIIFLPNKNQGIKLQKRNSALQVLQNVRDEAHRRANNFNNKLHNNIKLNYTKIKGIGEQKAKKILKVLGTYKDILLLNEDEIATKMKINITMANKIKKFAEEQNLNNKQNNHI.

Residues 17–94 (KTSGCYKMYS…IKKYKPTYNI (78 aa)) enclose the GIY-YIG domain. The UVR domain maps to 199-234 (SKLLNDIEIKMKEVIMKENFEAAIKLKETKKSLIEI).

This sequence belongs to the UvrC family. Interacts with UvrB in an incision complex.

It localises to the cytoplasm. Its function is as follows. The UvrABC repair system catalyzes the recognition and processing of DNA lesions. UvrC both incises the 5' and 3' sides of the lesion. The N-terminal half is responsible for the 3' incision and the C-terminal half is responsible for the 5' incision. This Borrelia duttonii (strain Ly) protein is UvrABC system protein C.